The primary structure comprises 429 residues: Enolase (429 aa).

Gln-164 contributes to the (2R)-2-phosphoglycerate binding site. Glu-206 serves as the catalytic Proton donor. Positions 243, 286, and 313 each coordinate Mg(2+). (2R)-2-phosphoglycerate-binding residues include Lys-338, Arg-367, Ser-368, and Lys-389. Catalysis depends on Lys-338, which acts as the Proton acceptor.

This sequence belongs to the enolase family. Requires Mg(2+) as cofactor.

The protein localises to the cytoplasm. It is found in the secreted. It localises to the cell surface. It catalyses the reaction (2R)-2-phosphoglycerate = phosphoenolpyruvate + H2O. The protein operates within carbohydrate degradation; glycolysis; pyruvate from D-glyceraldehyde 3-phosphate: step 4/5. Its function is as follows. Catalyzes the reversible conversion of 2-phosphoglycerate (2-PG) into phosphoenolpyruvate (PEP). It is essential for the degradation of carbohydrates via glycolysis. The chain is Enolase from Thermosipho melanesiensis (strain DSM 12029 / CIP 104789 / BI429).